The sequence spans 371 residues: Tetraacyldisaccharide 4'-kinase (371 aa).

Ala63–Thr70 serves as a coordination point for ATP.

It belongs to the LpxK family.

The catalysed reaction is a lipid A disaccharide + ATP = a lipid IVA + ADP + H(+). Its pathway is glycolipid biosynthesis; lipid IV(A) biosynthesis; lipid IV(A) from (3R)-3-hydroxytetradecanoyl-[acyl-carrier-protein] and UDP-N-acetyl-alpha-D-glucosamine: step 6/6. Functionally, transfers the gamma-phosphate of ATP to the 4'-position of a tetraacyldisaccharide 1-phosphate intermediate (termed DS-1-P) to form tetraacyldisaccharide 1,4'-bis-phosphate (lipid IVA). In Anaeromyxobacter sp. (strain Fw109-5), this protein is Tetraacyldisaccharide 4'-kinase.